The following is a 132-amino-acid chain: Small ribosomal subunit protein uS8 (132 aa).

It belongs to the universal ribosomal protein uS8 family. In terms of assembly, part of the 30S ribosomal subunit. Contacts proteins S5 and S12.

In terms of biological role, one of the primary rRNA binding proteins, it binds directly to 16S rRNA central domain where it helps coordinate assembly of the platform of the 30S subunit. This chain is Small ribosomal subunit protein uS8, found in Rickettsia akari (strain Hartford).